The following is a 294-amino-acid chain: Oligopeptide transport system permease protein OppC (294 aa).

6 helical membrane passes run Met27–Leu47, Ile94–Gly114, Phe127–Ile147, Asn151–Ile171, Ile202–Leu224, and Trp260–Gly280. The ABC transmembrane type-1 domain occupies Ala88 to Gly280.

The protein belongs to the binding-protein-dependent transport system permease family. OppBC subfamily. As to quaternary structure, the complex is composed of two ATP-binding proteins (OppD and OppF), two transmembrane proteins (OppB and OppC) and a solute-binding protein (OppA).

The protein localises to the cell membrane. Its function is as follows. Part of the ABC transporter complex OppABCDF involved in the uptake of oligopeptides. Probably responsible for the translocation of the substrate across the membrane. Essential for uptake of peptides larger than three amino acids and for growth in milk. The sequence is that of Oligopeptide transport system permease protein OppC (oppC) from Lactococcus lactis subsp. lactis (strain IL1403) (Streptococcus lactis).